The chain runs to 262 residues: Steroid 5-alpha-reductase DET2 (262 aa).

A run of 6 helical transmembrane segments spans residues 13 to 33 (CLLT…FLQA), 51 to 71 (IAWF…FPFG), 79 to 99 (SLLL…IYPL), 113 to 133 (FPIT…YIQA), 148 to 168 (WFWW…YINI), and 205 to 225 (AIEW…GFFL).

It belongs to the steroid 5-alpha reductase family.

The protein localises to the membrane. The enzyme catalyses a 3-oxo-5alpha-steroid + NADP(+) = a 3-oxo-Delta(4)-steroid + NADPH + H(+). The catalysed reaction is 5alpha-campestan-3-one + NADP(+) = campest-4-en-3-one + NADPH + H(+). It catalyses the reaction (22S,24R)-22-hydroxy-5alpha-ergostan-3-one + NADP(+) = (22S)-22-hydroxycampest-4-en-3-one + NADPH + H(+). It carries out the reaction 3-dehydro-6-deoxoteasterone + NADP(+) = (22R,23R)-22,23-dihydroxycampest-4-en-3-one + NADPH + H(+). The protein operates within plant hormone biosynthesis; brassinosteroid biosynthesis. With respect to regulation, inhibited by the 4-azasteroids 4-MA. Its function is as follows. Involved in a reduction step in the biosynthesis of the plant steroid, brassinolide (BL); acts at the second step in brassinolide biosynthesis in the 5alpha-reduction of (24R)- 24-methylcholest-4-en-3-one, which is further modified to form campestanol. Can use progesterone, testosterone, androstenedione and campestenone as substrate. Also catalyzes the conversion of campest-4-en-3-one (campesta-4-en-3-one, 4-en-3-one) to campest-3-one (campesta-3-one, 3-one), of (22S,24R)-22-hydroxyergost-4-en-3-one (22-hydroxy-campesta-4-en-3-one, 22-OH-4-en-3-one) to (22S,24R)-22-hydroxy-5alpha-ergostan-3-one (22-hydroxy-campesta-3-one, 22-OH-3-one), and of (22R,23R)-22,23-dihydroxy-5alpha-campestan-3-one (22,23,diOH-4-en-3-one) to (22R,23R)-22,23-dihydroxycampest-4-en-3-one (6-deoxo3DT). Required for the brassinosteroid- (BR) dependent regulation of seed size and shape as well as embryo development. The polypeptide is Steroid 5-alpha-reductase DET2 (Arabidopsis thaliana (Mouse-ear cress)).